The chain runs to 350 residues: Protein RecA (350 aa).

67-74 (GPESSGKT) lines the ATP pocket.

Belongs to the RecA family.

It is found in the cytoplasm. In terms of biological role, can catalyze the hydrolysis of ATP in the presence of single-stranded DNA, the ATP-dependent uptake of single-stranded DNA by duplex DNA, and the ATP-dependent hybridization of homologous single-stranded DNAs. It interacts with LexA causing its activation and leading to its autocatalytic cleavage. This chain is Protein RecA, found in Wolinella succinogenes (strain ATCC 29543 / DSM 1740 / CCUG 13145 / JCM 31913 / LMG 7466 / NCTC 11488 / FDC 602W) (Vibrio succinogenes).